A 98-amino-acid polypeptide reads, in one-letter code: NADH-ubiquinone oxidoreductase chain 4L (98 aa).

A run of 3 helical transmembrane segments spans residues Met-1–Ile-21, Ser-28–Ile-48, and Ala-59–Val-79.

The protein belongs to the complex I subunit 4L family. As to quaternary structure, core subunit of respiratory chain NADH dehydrogenase (Complex I) which is composed of 45 different subunits.

The protein resides in the mitochondrion inner membrane. The catalysed reaction is a ubiquinone + NADH + 5 H(+)(in) = a ubiquinol + NAD(+) + 4 H(+)(out). In terms of biological role, core subunit of the mitochondrial membrane respiratory chain NADH dehydrogenase (Complex I) which catalyzes electron transfer from NADH through the respiratory chain, using ubiquinone as an electron acceptor. Part of the enzyme membrane arm which is embedded in the lipid bilayer and involved in proton translocation. In Lagostrophus fasciatus (Banded hare-wallaby), this protein is NADH-ubiquinone oxidoreductase chain 4L (MT-ND4L).